The sequence spans 216 residues: MLWKNLDELFLKYDRVVILTLSSGLSSYFESLSIIKEDYKDKHLVCIDSRSVSIGILWLVDEINLLLKNNPSDEELISLVKQRSQKIIGGVIVNNLDQLIAGGRVKKTKGIIAKALRLKLIVRWNGQLDFMDKTPNLSTAIDKLLDIIDNQNHWRTNGIKNIAILTDLENESQINSLKTSLQEKIRQTIEIKISYLPGCIYAHVGLNNFAILIEAK.

Residues 1–215 form the DegV domain; it reads MLWKNLDELF…LNNFAILIEA (215 aa). Serine 26 is a hexadecanoate binding site.

Functionally, may bind long-chain fatty acids, such as palmitate, and may play a role in lipid transport or fatty acid metabolism. This is DegV domain-containing protein UU190 from Ureaplasma parvum serovar 3 (strain ATCC 700970).